A 294-amino-acid chain; its full sequence is 4-hydroxy-tetrahydrodipicolinate synthase (294 aa).

A pyruvate-binding site is contributed by Thr45. Tyr133 functions as the Proton donor/acceptor in the catalytic mechanism. The active-site Schiff-base intermediate with substrate is the Lys162. Position 204 (Ile204) interacts with pyruvate.

It belongs to the DapA family. As to quaternary structure, homotetramer; dimer of dimers.

The protein localises to the cytoplasm. The enzyme catalyses L-aspartate 4-semialdehyde + pyruvate = (2S,4S)-4-hydroxy-2,3,4,5-tetrahydrodipicolinate + H2O + H(+). The protein operates within amino-acid biosynthesis; L-lysine biosynthesis via DAP pathway; (S)-tetrahydrodipicolinate from L-aspartate: step 3/4. Its activity is regulated as follows. Is allosterically regulated by the feedback inhibitor (S)-lysine. Functionally, catalyzes the condensation of (S)-aspartate-beta-semialdehyde [(S)-ASA] and pyruvate to 4-hydroxy-tetrahydrodipicolinate (HTPA). The polypeptide is 4-hydroxy-tetrahydrodipicolinate synthase (Agrobacterium fabrum (strain C58 / ATCC 33970) (Agrobacterium tumefaciens (strain C58))).